The following is a 242-amino-acid chain: Polycomb group RING finger protein 3 (242 aa).

The RING-type zinc finger occupies 17–56 (CRLCSGYLIDATTVTECLHTFCRSCLVKYLEENNTCPTCR). The disordered stretch occupies residues 115–149 (AKQHLDPHRNGETKADDSSNKEAAEEKQEEDGDYH). The segment covering 117-140 (QHLDPHRNGETKADDSSNKEAAEE) has biased composition (basic and acidic residues). An interaction with BCORL1 region spans residues 132-242 (SSNKEAAEEK…LHYRPKMDLL (111 aa)).

Component of a PRC1-like complex that contains PCGF3, RNF2 and RYBP. Interacts with CBX6, CBX7 and CBX8. Interacts with BCORL1.

The protein localises to the nucleus. It is found in the nucleoplasm. Component of a Polycomb group (PcG) multiprotein PRC1-like complex, a complex class required to maintain the transcriptionally repressive state of many genes, including Hox genes, throughout development. PcG PRC1 complex acts via chromatin remodeling and modification of histones; it mediates monoubiquitination of histone H2A 'Lys-119', rendering chromatin heritably changed in its expressibility. Within the PRC1-like complex, regulates RNF2 ubiquitin ligase activity. Plays a redundant role with PCGF5 as part of a PRC1-like complex that mediates monoubiquitination of histone H2A 'Lys-119' on the X chromosome and is required for normal silencing of one copy of the X chromosome in XX females. The chain is Polycomb group RING finger protein 3 (PCGF3) from Bos taurus (Bovine).